A 508-amino-acid polypeptide reads, in one-letter code: Glycerol kinase (508 aa).

Thr15 lines the ADP pocket. ATP is bound by residues Thr15, Ser16, and Ser17. A sn-glycerol 3-phosphate-binding site is contributed by Thr15. Arg19 is a binding site for ADP. Residues Arg85, Glu86, Tyr138, and Asp251 each coordinate sn-glycerol 3-phosphate. The glycerol site is built by Arg85, Glu86, Tyr138, Asp251, and Gln252. Residues Thr273, Gly317, and Gly419 each coordinate ADP. Residues Thr273, Gly317, and Gly419 each contribute to the ATP site.

It belongs to the FGGY kinase family.

The catalysed reaction is glycerol + ATP = sn-glycerol 3-phosphate + ADP + H(+). It functions in the pathway polyol metabolism; glycerol degradation via glycerol kinase pathway; sn-glycerol 3-phosphate from glycerol: step 1/1. Its activity is regulated as follows. Inhibited by fructose 1,6-bisphosphate (FBP). Functionally, key enzyme in the regulation of glycerol uptake and metabolism. Catalyzes the phosphorylation of glycerol to yield sn-glycerol 3-phosphate. This Mycoplasma genitalium (strain ATCC 33530 / DSM 19775 / NCTC 10195 / G37) (Mycoplasmoides genitalium) protein is Glycerol kinase.